The primary structure comprises 430 residues: Elongation factor 1-gamma (430 aa).

The 83-residue stretch at 2–84 folds into the GST N-terminal domain; sequence VAGKLYTYPE…YVANETLRGS (83 aa). The region spanning 85-213 is the GST C-terminal domain; that stretch reads SDLEKAQIIQ…FKLCEKAGEF (129 aa). 2 stretches are compositionally biased toward basic and acidic residues: residues 232–255 and 269–278; these read KTEK…KEQE and PKSKDPFDEM. Residues 232–278 are disordered; that stretch reads KTEKAPKAVKAKPEKKEVPKKEQEEPADAAEEALAAEPKSKDPFDEM. The EF-1-gamma C-terminal domain maps to 271-430; that stretch reads SKDPFDEMPK…RKFNQGKIFK (160 aa).

In terms of assembly, EF-1 is composed of four subunits: alpha, beta, delta, and gamma.

Functionally, probably plays a role in anchoring the complex to other cellular components. The sequence is that of Elongation factor 1-gamma from Artemia salina (Brine shrimp).